Reading from the N-terminus, the 146-residue chain is MRVVLQRSKKASVAVDGEIVGQIPFGLTLLVGITHEDTEKDATYIAEKIANLRIFEDESGKMNHSVLDVEGQVLSISQFTLYGDCRKGRRPNFMDAAKPDYAERLYDFFNEEVRKQGLHVETGKFGAMMDVSLINDGPVTLIVESK.

The Gly-cisPro motif, important for rejection of L-amino acids motif lies at 137 to 138; sequence GP.

This sequence belongs to the DTD family. As to quaternary structure, homodimer.

The protein resides in the cytoplasm. The catalysed reaction is glycyl-tRNA(Ala) + H2O = tRNA(Ala) + glycine + H(+). The enzyme catalyses a D-aminoacyl-tRNA + H2O = a tRNA + a D-alpha-amino acid + H(+). An aminoacyl-tRNA editing enzyme that deacylates mischarged D-aminoacyl-tRNAs. Also deacylates mischarged glycyl-tRNA(Ala), protecting cells against glycine mischarging by AlaRS. Acts via tRNA-based rather than protein-based catalysis; rejects L-amino acids rather than detecting D-amino acids in the active site. By recycling D-aminoacyl-tRNA to D-amino acids and free tRNA molecules, this enzyme counteracts the toxicity associated with the formation of D-aminoacyl-tRNA entities in vivo and helps enforce protein L-homochirality. The sequence is that of D-aminoacyl-tRNA deacylase from Bacillus cereus (strain B4264).